Consider the following 247-residue polypeptide: Cell division protein ZapD (247 aa).

The protein belongs to the ZapD family. As to quaternary structure, interacts with FtsZ.

The protein localises to the cytoplasm. Functionally, cell division factor that enhances FtsZ-ring assembly. Directly interacts with FtsZ and promotes bundling of FtsZ protofilaments, with a reduction in FtsZ GTPase activity. The sequence is that of Cell division protein ZapD from Shigella dysenteriae serotype 1 (strain Sd197).